A 1353-amino-acid polypeptide reads, in one-letter code: Stress response protein NST1 (1353 aa).

The span at 1–12 (MSSKSQQPPTGL) shows a compositional bias: polar residues. Disordered regions lie at residues 1 to 66 (MSSK…FFNF), 216 to 422 (NANA…TQSS), 503 to 522 (NGLR…VEVD), 531 to 618 (DHRA…SFGS), 652 to 694 (RRSV…AEEG), 727 to 882 (LREL…AKET), 979 to 1119 (GLKS…DDAF), 1140 to 1276 (GSLI…GAGV), and 1308 to 1337 (GGTA…HQQQ). A compositionally biased stretch (basic residues) spans 16–25 (AAKKRAKKAA). The segment covering 26-45 (KQSQNPQPQSAPQTSSQTPA) has biased composition (low complexity). Over residues 46–59 (SVPPLPPASVPDPL) the composition is skewed to pro residues. Residues 218–229 (NARSFPSPQQTI) show a composition bias toward polar residues. Acidic residues predominate over residues 242–254 (REEEYDDEEEIEE). The segment covering 268–277 (KKNKKKKKKG) has biased composition (basic residues). Positions 287 to 300 (VEPPAPLPPLPPPS) are enriched in pro residues. Residues 317–330 (LPTHQPQPLSQQPP) show a composition bias toward low complexity. Residues 331–349 (SLNPLPPPAPASAPTPTPP) are compositionally biased toward pro residues. Over residues 368–388 (PARSARAAGKAPASAAPPHNA) the composition is skewed to low complexity. A compositionally biased stretch (basic and acidic residues) spans 531 to 541 (DHRAPELHDHD). Residues 542 to 583 (PDDLDGEESEEYDDDDDYADDDELDDDDIGTDEADVGDEIDE) are compositionally biased toward acidic residues. A compositionally biased stretch (basic and acidic residues) spans 654-665 (SVREEQNLRDMQ). Positions 666 to 681 (EETDEEEEEEDDDESR) are enriched in acidic residues. Basic and acidic residues-rich tracts occupy residues 682 to 694 (DEPM…AEEG), 727 to 750 (LREL…EAQK), and 760 to 882 (QKAE…AKET). Positions 713–944 (AYRERVAKQR…AAQQAQRERA (232 aa)) form a coiled coil. Over residues 1009–1021 (TNATPGRSMQKTP) the composition is skewed to polar residues. Over residues 1154 to 1165 (PTPPAPIAPPNL) the composition is skewed to pro residues. Composition is skewed to polar residues over residues 1174–1187 (SDGQ…LRST) and 1209–1220 (QPQQRRPTTSWD).

This sequence belongs to the NST1 family.

It localises to the cytoplasm. May act as a negative regulator of salt tolerance. This is Stress response protein NST1 (NST1) from Cryptococcus neoformans var. neoformans serotype D (strain B-3501A) (Filobasidiella neoformans).